Here is a 623-residue protein sequence, read N- to C-terminus: V-type proton ATPase catalytic subunit A (623 aa).

252–259 (GAFGCGKT) contacts ATP.

This sequence belongs to the ATPase alpha/beta chains family. V-ATPase is a heteromultimeric enzyme composed of a peripheral catalytic V1 complex (main components: subunits A, B, C, D, E, and F) attached to an integral membrane V0 proton pore complex (main component: the proteolipid protein).

It catalyses the reaction ATP + H2O + 4 H(+)(in) = ADP + phosphate + 5 H(+)(out). In terms of biological role, catalytic subunit of the peripheral V1 complex of vacuolar ATPase. V-ATPase vacuolar ATPase is responsible for acidifying a variety of intracellular compartments in eukaryotic cells. The polypeptide is V-type proton ATPase catalytic subunit A (Daucus carota (Wild carrot)).